We begin with the raw amino-acid sequence, 123 residues long: Small ribosomal subunit protein uS11 (123 aa).

The protein belongs to the universal ribosomal protein uS11 family. In terms of assembly, part of the 30S ribosomal subunit. Interacts with proteins S7 and S18. Binds to IF-3.

Functionally, located on the platform of the 30S subunit, it bridges several disparate RNA helices of the 16S rRNA. Forms part of the Shine-Dalgarno cleft in the 70S ribosome. The protein is Small ribosomal subunit protein uS11 of Coxiella burnetii (strain CbuK_Q154) (Coxiella burnetii (strain Q154)).